A 232-amino-acid chain; its full sequence is Phosphatidylserine decarboxylase proenzyme (232 aa).

The active-site Schiff-base intermediate with substrate; via pyruvic acid is S190. S190 carries the post-translational modification Pyruvic acid (Ser); by autocatalysis.

The protein belongs to the phosphatidylserine decarboxylase family. PSD-A subfamily. In terms of assembly, heterodimer of a large membrane-associated beta subunit and a small pyruvoyl-containing alpha subunit. Pyruvate is required as a cofactor. Is synthesized initially as an inactive proenzyme. Formation of the active enzyme involves a self-maturation process in which the active site pyruvoyl group is generated from an internal serine residue via an autocatalytic post-translational modification. Two non-identical subunits are generated from the proenzyme in this reaction, and the pyruvate is formed at the N-terminus of the alpha chain, which is derived from the carboxyl end of the proenzyme. The post-translation cleavage follows an unusual pathway, termed non-hydrolytic serinolysis, in which the side chain hydroxyl group of the serine supplies its oxygen atom to form the C-terminus of the beta chain, while the remainder of the serine residue undergoes an oxidative deamination to produce ammonia and the pyruvoyl prosthetic group on the alpha chain.

Its subcellular location is the cell membrane. It carries out the reaction a 1,2-diacyl-sn-glycero-3-phospho-L-serine + H(+) = a 1,2-diacyl-sn-glycero-3-phosphoethanolamine + CO2. It functions in the pathway phospholipid metabolism; phosphatidylethanolamine biosynthesis; phosphatidylethanolamine from CDP-diacylglycerol: step 2/2. Functionally, catalyzes the formation of phosphatidylethanolamine (PtdEtn) from phosphatidylserine (PtdSer). The sequence is that of Phosphatidylserine decarboxylase proenzyme from Cereibacter sphaeroides (strain ATCC 17025 / ATH 2.4.3) (Rhodobacter sphaeroides).